A 500-amino-acid chain; its full sequence is Maturase K (500 aa).

The protein belongs to the intron maturase 2 family. MatK subfamily.

Its subcellular location is the plastid. It localises to the chloroplast. Usually encoded in the trnK tRNA gene intron. Probably assists in splicing its own and other chloroplast group II introns. In Fragaria vesca (Woodland strawberry), this protein is Maturase K.